A 76-amino-acid polypeptide reads, in one-letter code: Small ribosomal subunit protein uS17 (76 aa).

It belongs to the universal ribosomal protein uS17 family. As to quaternary structure, part of the 30S ribosomal subunit.

In terms of biological role, one of the primary rRNA binding proteins, it binds specifically to the 5'-end of 16S ribosomal RNA. In Ruegeria sp. (strain TM1040) (Silicibacter sp.), this protein is Small ribosomal subunit protein uS17.